The following is a 433-amino-acid chain: Succinate--CoA ligase [GDP-forming] subunit beta, mitochondrial (433 aa).

The N-terminal 38 residues, 1–38, are a transit peptide targeting the mitochondrion; sequence MASPVAIAAQAGKLLRERALRPLLAVRSQAGHLTPRRW. Residues 47-275 form the ATP-grasp domain; sequence KKLMSEHGVR…NAEFRQKDIF (229 aa). Gln58 is a binding site for GTP. Residue Lys67 is modified to N6-acetyllysine; alternate. Lys67 bears the N6-succinyllysine; alternate mark. Residue Lys74 is modified to N6-acetyllysine. The residue at position 79 (Lys79) is an N6-succinyllysine. 91–93 contributes to the GTP binding site; that stretch reads GRG. N6-acetyllysine occurs at positions 112, 133, and 140. Residue Leu147 coordinates GTP. At Ser162 the chain carries Phosphoserine. Position 201 is an N6-acetyllysine (Lys201). Phosphoserine is present on Ser217. N6-acetyllysine occurs at positions 219 and 228. 2 residues coordinate Mg(2+): Asn244 and Asp258. Residue Lys272 is modified to N6-acetyllysine. Asn309 serves as a coordination point for substrate. Lys339 is subject to N6-succinyllysine. Lys348 is subject to N6-acetyllysine. 366–368 lines the substrate pocket; sequence GIV. Residues Lys387, Lys407, and Lys424 each carry the N6-acetyllysine modification.

Belongs to the succinate/malate CoA ligase beta subunit family. GTP-specific subunit beta subfamily. In terms of assembly, heterodimer of an alpha and a beta subunit. The beta subunit determines specificity for GTP. It depends on Mg(2+) as a cofactor.

Its subcellular location is the mitochondrion. It catalyses the reaction GTP + succinate + CoA = succinyl-CoA + GDP + phosphate. The protein operates within carbohydrate metabolism; tricarboxylic acid cycle; succinate from succinyl-CoA (ligase route): step 1/1. Functionally, GTP-specific succinyl-CoA synthetase functions in the citric acid cycle (TCA), coupling the hydrolysis of succinyl-CoA to the synthesis of GTP and thus represents the only step of substrate-level phosphorylation in the TCA. The beta subunit provides nucleotide specificity of the enzyme and binds the substrate succinate, while the binding sites for coenzyme A and phosphate are found in the alpha subunit. The protein is Succinate--CoA ligase [GDP-forming] subunit beta, mitochondrial of Mus musculus (Mouse).